The primary structure comprises 156 residues: Gene 55 protein (156 aa).

Residues 132-156 form a disordered region; the sequence is KRRWSGGNASSHEERMRGPFTEVAE.

This Mycobacterium phage L5 (Mycobacteriophage L5) protein is Gene 55 protein (55).